A 321-amino-acid chain; its full sequence is Glucokinase (321 aa).

8 to 13 lines the ATP pocket; that stretch reads GDVGGT.

It belongs to the bacterial glucokinase family.

It localises to the cytoplasm. It carries out the reaction D-glucose + ATP = D-glucose 6-phosphate + ADP + H(+). This chain is Glucokinase, found in Cronobacter sakazakii (strain ATCC BAA-894) (Enterobacter sakazakii).